The chain runs to 1164 residues: Integrin alpha-5 (1164 aa).

The span at 1–14 shows a compositional bias: basic and acidic residues; that stretch reads MREEGGGSREKEGE. Residues 1 to 119 are disordered; that stretch reads MREEGGGSRE…MGSRTPGSPL (119 aa). Residues 81-90 show a composition bias toward low complexity; sequence LLPALSHSPL. Residues 156 to 221 form an FG-GAP 1 repeat; the sequence is NLDAEAPAVL…CPWGTSPAQC (66 aa). An N-linked (GlcNAc...) asparagine glycan is attached at Asn197. An intrachain disulfide couples Cys212 to Cys221. Ser240 carries the phosphoserine modification. 6 FG-GAP repeats span residues 241–301, 306–358, 372–424, 425–490, 491–550, and 554–617; these read SEGE…QILE, RSDF…AESY, QTRQ…GSDI, RSLY…GMEP, TPTL…GLAS, and QVLL…IFPA. Cys269 and Cys289 form a disulfide bridge. Asn295 is a glycosylation site (N-linked (GlcNAc...) asparagine). The cysteines at positions 305 and 318 are disulfide-linked. Positions 375 and 382 each coordinate a protein. Ca(2+) is bound by residues Glu393, Ser395, Asp397, and Asp401. Residues Asn410, Asn420, and Asn429 are each glycosylated (N-linked (GlcNAc...) asparagine). Asp447, Asn449, Asp451, Leu453, Asp455, Asp514, Asp516, Asp518, Tyr520, Asp522, Asp578, Asp580, Asn582, Tyr584, and Asp586 together coordinate Ca(2+). Residues Cys626 and Cys635 are joined by a disulfide bond. N-linked (GlcNAc...) asparagine glycosylation is found at Asn637, Asn643, Asn706, and Asn722. Residues Cys641 and Cys697 are joined by a disulfide bond. Cys758 and Cys764 are disulfide-bonded. Residues Asn788, Asn825, Asn837, Asn886, and Asn982 are each glycosylated (N-linked (GlcNAc...) asparagine). The cysteines at positions 831 and 844 are disulfide-linked. 3 disulfides stabilise this stretch: Cys962-Cys1072, Cys983-Cys1036, and Cys1026-Cys1031. Residues 983–1022 are disordered; it reads CTTSHPPNPEGLELDPEGSQHHRLQRRDVPGRSPASSGPQ. The helical transmembrane segment at 1114-1134 threads the bilayer; sequence LWIIILAILIGLLLLGLLIYI. Residues 1135–1164 lie on the Cytoplasmic side of the membrane; it reads LYKLGFFKRSLPYGTAMEKAQLKPPATSDA. The interaction with HPS5 stretch occupies residues 1136 to 1143; the sequence is YKLGFFKR. Residues 1139–1143 carry the GFFKR motif motif; the sequence is GFFKR.

Belongs to the integrin alpha chain family. Heterodimer of an alpha and a beta subunit. The alpha subunit is composed of a heavy and a light chain linked by a disulfide bond. Alpha-5 associates with beta-1. Interacts with NISCH. Interacts with HPS5. Interacts with RAB21 and COMP. Interacts with CIB1. ITGA5:ITGB1 interacts with CCN3. ITGA5:ITGB1 interacts with FBN1. ITGA5:ITGB1 interacts with IL1B. ITGA5:ITGB1 interacts with ACE2. ITGA5:ITGB1 interacts with SELP. Interacts with ANGPT2. ITGA5:ITGB1 interacts with IGFBP2. ITGA5:ITGB1 interacts with IGFBP1. Post-translationally, proteolytic cleavage by PCSK5 mediates activation of the precursor.

The protein localises to the cell membrane. Its subcellular location is the cell junction. The protein resides in the focal adhesion. In terms of biological role, integrin alpha-5/beta-1 (ITGA5:ITGB1) is a receptor for fibronectin and fibrinogen. It recognizes the sequence R-G-D in its ligands. ITGA5:ITGB1 binds to PLA2G2A via a site (site 2) which is distinct from the classical ligand-binding site (site 1) and this induces integrin conformational changes and enhanced ligand binding to site 1. ITGA5:ITGB1 acts as a receptor for fibrillin-1 (FBN1) and mediates R-G-D-dependent cell adhesion to FBN1. ITGA5:ITGB1 acts as a receptor for fibronectin (FN1) and mediates R-G-D-dependent cell adhesion to FN1. ITGA5:ITGB1 is a receptor for IL1B and binding is essential for IL1B signaling. ITGA5:ITGB3 is a receptor for soluble CD40LG and is required for CD40/CD40LG signaling. The protein is Integrin alpha-5 (ITGA5) of Bos taurus (Bovine).